Consider the following 350-residue polypeptide: UDP-3-O-acylglucosamine N-acyltransferase (350 aa).

His240 functions as the Proton acceptor in the catalytic mechanism.

It belongs to the transferase hexapeptide repeat family. LpxD subfamily. As to quaternary structure, homotrimer.

The enzyme catalyses a UDP-3-O-[(3R)-3-hydroxyacyl]-alpha-D-glucosamine + a (3R)-hydroxyacyl-[ACP] = a UDP-2-N,3-O-bis[(3R)-3-hydroxyacyl]-alpha-D-glucosamine + holo-[ACP] + H(+). It participates in bacterial outer membrane biogenesis; LPS lipid A biosynthesis. Functionally, catalyzes the N-acylation of UDP-3-O-acylglucosamine using 3-hydroxyacyl-ACP as the acyl donor. Is involved in the biosynthesis of lipid A, a phosphorylated glycolipid that anchors the lipopolysaccharide to the outer membrane of the cell. This is UDP-3-O-acylglucosamine N-acyltransferase from Methylobacillus flagellatus (strain ATCC 51484 / DSM 6875 / VKM B-1610 / KT).